Reading from the N-terminus, the 188-residue chain is ATP-dependent protease subunit HslV (188 aa).

Thr7 is an active-site residue. Na(+) contacts are provided by Gly162, Cys165, and Ser168.

It belongs to the peptidase T1B family. HslV subfamily. In terms of assembly, a double ring-shaped homohexamer of HslV is capped on each side by a ring-shaped HslU homohexamer. The assembly of the HslU/HslV complex is dependent on binding of ATP.

The protein localises to the cytoplasm. It catalyses the reaction ATP-dependent cleavage of peptide bonds with broad specificity.. With respect to regulation, allosterically activated by HslU binding. Its function is as follows. Protease subunit of a proteasome-like degradation complex believed to be a general protein degrading machinery. In Thiobacillus denitrificans (strain ATCC 25259 / T1), this protein is ATP-dependent protease subunit HslV.